The primary structure comprises 429 residues: Probable alcohol acetyltransferase orf1 (429 aa).

The protein belongs to the alcohol acetyltransferase FCK4 family.

Its pathway is secondary metabolite biosynthesis. Functionally, probable alcohol acetyltransferase; part of the gene cluster that mediates the biosynthesis of the glycolipid biosurfactant ustilagic acid (UA). UA is a secreted cellobiose glycolipid that is toxic for many microorganisms and confers biocontrol activity to U.maydis. UA consists of 15,16-dihydroxypalmitic or 2,15,16-trihydroxypalmitic acid, which is O-glycosidically linked to cellobiose at its terminal hydroxyl group. In addition, the cellobiose moiety is acetylated and acylated with a short-chain hydroxy fatty acid. UA biosynthesis starts with omega-hydroxylation of palmitic acid catalyzed by the cytochrome P450 monooxygenase cyp1. Terminal hydroxylation of palmitic acid precedes subterminal hydroxylation catalyzed by the cytochrome P450 monooxygenase cyp2. Sequential glucosylation of the hydroxy fatty acid is probably catalyzed by the glycosyltransferase ugt1. The cellobiose lipid is further decorated by acetylation of the proximal glucose residue and by acylation with a short-chain beta-hydroxy fatty acid at the distal glucose residue. The acyltransferase uat1 may be a good candidate for catalyzing either acetylation or acylation of the cellobiose lipid. The fatty acid synthase fas2 may be involved in synthesis of the carbon backbone of the short-chain beta-hydroxy fatty acid esterified to the cellobiose disaccharide. The secreted UA consists of a mixture of both alpha-hydroxylated and non-hydroxylated glycolipids; therefore, alpha-hydroxylation of the long-chain fatty, catalyzed by the fatty acid hydroxylase ahd1, occurs late in UA biosynthesis and may be the last step before secretion. This Mycosarcoma maydis (Corn smut fungus) protein is Probable alcohol acetyltransferase orf1.